Consider the following 60-residue polypeptide: Large ribosomal subunit protein uL30 (60 aa).

It belongs to the universal ribosomal protein uL30 family. Part of the 50S ribosomal subunit.

The chain is Large ribosomal subunit protein uL30 from Salinispora tropica (strain ATCC BAA-916 / DSM 44818 / JCM 13857 / NBRC 105044 / CNB-440).